The sequence spans 257 residues: Small ribosomal subunit protein uS3 (257 aa).

The KH type-2 domain maps to 39-112 (IRKFLNKKYN…EIVFNVVEVR (74 aa)). Positions 217-257 (HEELRKERQSSASSNHGGGKRRPSRKGPRRSQEDAATEGGN) are disordered. The segment covering 234 to 245 (GGKRRPSRKGPR) has biased composition (basic residues).

The protein belongs to the universal ribosomal protein uS3 family. In terms of assembly, part of the 30S ribosomal subunit. Forms a tight complex with proteins S10 and S14.

Binds the lower part of the 30S subunit head. Binds mRNA in the 70S ribosome, positioning it for translation. The sequence is that of Small ribosomal subunit protein uS3 from Haploplasma axanthum (Acholeplasma axanthum).